We begin with the raw amino-acid sequence, 376 residues long: Erythronate-4-phosphate dehydrogenase (376 aa).

Positions 45 and 67 each coordinate substrate. NAD(+) is bound by residues 127–128 (QV), D147, and T176. R209 is an active-site residue. D233 contacts NAD(+). The active site involves E238. The Proton donor role is filled by H255. G258 contributes to the NAD(+) binding site. Y259 lines the substrate pocket.

The protein belongs to the D-isomer specific 2-hydroxyacid dehydrogenase family. PdxB subfamily. Homodimer.

It is found in the cytoplasm. It carries out the reaction 4-phospho-D-erythronate + NAD(+) = (R)-3-hydroxy-2-oxo-4-phosphooxybutanoate + NADH + H(+). It functions in the pathway cofactor biosynthesis; pyridoxine 5'-phosphate biosynthesis; pyridoxine 5'-phosphate from D-erythrose 4-phosphate: step 2/5. Catalyzes the oxidation of erythronate-4-phosphate to 3-hydroxy-2-oxo-4-phosphonooxybutanoate. The chain is Erythronate-4-phosphate dehydrogenase from Aliivibrio salmonicida (strain LFI1238) (Vibrio salmonicida (strain LFI1238)).